The following is a 388-amino-acid chain: MKWMVVVLVCLQLLEAAVVKVPLKKFKSIRETMKEKGLLGEFLRTHKYDPAWKYRFGDLSVTYEPMAYMDAAYFGEISIGTPPQNFLVLFDTGSSNLWVPSVYCQSQACTSHSRFNPSESSTYSTNGQTFSLQYGSGSLTGFFGYDTLTVQSIQVPNQEFGLSENEPGTNFVYAQFDGIMGLAYPALSVDEATTAMQGMVQEGALTSPVFSVYLSNQQGSSGGAVVFGGVDSSLYTGQIYWAPVTQELYWQIGIEEFLIGGQASGWCSEGCQAIVDTGTSLLTVPQQYMSALLQATGAQEDEYGQFLVNCNSIQNLPSLTFIINGVEFPLPPSSYILSNNGYCTVGVEPTYLSSQNGQPLWILGDVFLRSYYSVYDLGNNRVGFATAA.

A signal peptide spans 1-16 (MKWMVVVLVCLQLLEA). A propeptide spans 17–59 (AVVKVPLKKFKSIRETMKEKGLLGEFLRTHKYDPAWKYRFGDL) (activation peptide). The region spanning 73–385 (YFGEISIGTP…DLGNNRVGFA (313 aa)) is the Peptidase A1 domain. Asp91 is an active-site residue. 2 disulfide bridges follow: Cys104–Cys109 and Cys267–Cys271. The active site involves Asp276. Cys310 and Cys343 are joined by a disulfide.

It belongs to the peptidase A1 family.

Its subcellular location is the secreted. The catalysed reaction is More restricted specificity than pepsin A, but shows preferential cleavage at Tyr-|-Xaa bonds. High activity on hemoglobin.. Its function is as follows. Hydrolyzes a variety of proteins. This is Gastricsin (PGC) from Homo sapiens (Human).